We begin with the raw amino-acid sequence, 474 residues long: MEKGLALPQDCRDLVHNLKIRGRYVLFLAFVVIVFIFIEKENKIISRVSDKLKQIPQFVADANSTDPALLLSENASLLSLSELDSTFSHLRSRLHNLSLQLGIAPAMEAQGQEAVAEKPSQQAGAGTRRHVLLMATTRTGSSFVGEFFNQQGNIFYLFEPLWHIERTVFFQQGGASAAGSALVYRDVLKQLLLCDLYVLEPFISPPPEDHLTQFLFRRGSSRSLCEDPVCTPFVKKVFEKYHCRNRHCGPLNVTLAAEACRRKDHMALKVVRIRQLEFLQPLAEDPRLDLRVIQLVRDPRAVLASRMVAFAGKYESWKKWLSEGQDQLSENEVQRLRGNCENIRLSAELGLRQPAWLRGRYMLVRYEDVARRPLQKAREMYRSAGIPLTPQVEDWIQKNTQAARDSSDVYSTQKNSSEQFEKWRFSIPFKLAQVVQAVCGPAMHLFGHKLAKDTASLTNRSISLLEERGTFWVT.

The Cytoplasmic portion of the chain corresponds to 1–19; sequence MEKGLALPQDCRDLVHNLK. The helical; Signal-anchor for type II membrane protein transmembrane segment at 20–38 threads the bilayer; it reads IRGRYVLFLAFVVIVFIFI. Over 39–474 the chain is Lumenal; it reads EKENKIISRV…LEERGTFWVT (436 aa). N-linked (GlcNAc...) asparagine glycosylation is found at N63, N74, and N96. 137 to 143 is a binding site for 3'-phosphoadenylyl sulfate; sequence TRTGSSF. N-linked (GlcNAc...) asparagine glycosylation occurs at N252. 297–305 is a binding site for 3'-phosphoadenylyl sulfate; it reads RDPRAVLAS. N-linked (GlcNAc...) asparagine glycosylation is found at N415 and N459.

The protein belongs to the sulfotransferase 1 family. Gal/GlcNAc/GalNAc subfamily. Post-translationally, N-glycosylated.

Its subcellular location is the golgi apparatus membrane. It catalyses the reaction chondroitin beta-D-glucuronate + n 3'-phosphoadenylyl sulfate = chondroitin 6'-sulfate + n adenosine 3',5'-bisphosphate + n H(+). The catalysed reaction is 3'-phosphoadenylyl sulfate + keratan = adenosine 3',5'-bisphosphate + keratan 6'-sulfate.. Functionally, sulfotransferase that utilizes 3'-phospho-5'-adenylyl sulfate (PAPS) as sulfonate donor to catalyze the transfer of sulfate to position 6 of the N-acetylgalactosamine (GalNAc) residue of chondroitin. Chondroitin sulfate constitutes the predominant proteoglycan present in cartilage and is distributed on the surfaces of many cells and extracellular matrices. Catalyzes with a lower efficiency the sulfation of Gal residues of keratan sulfate, another glycosaminoglycan. Can also catalyze the sulfation of the Gal residues in sialyl N-acetyllactosamine (sialyl LacNAc) oligosaccharides. May play a role in the maintenance of naive T-lymphocytes in the spleen. The chain is Carbohydrate sulfotransferase 3 (Chst3) from Rattus norvegicus (Rat).